Here is a 79-residue protein sequence, read N- to C-terminus: NAD(P)H-quinone oxidoreductase subunit L (79 aa).

Helical transmembrane passes span 10–30 and 48–68; these read IIIALIYLSLSVLYLLVIPAV and GFMYFLMSFFFPGMLLLSPFL.

This sequence belongs to the complex I NdhL subunit family. In terms of assembly, NDH-1 can be composed of about 15 different subunits; different subcomplexes with different compositions have been identified which probably have different functions.

It is found in the cellular thylakoid membrane. It catalyses the reaction a plastoquinone + NADH + (n+1) H(+)(in) = a plastoquinol + NAD(+) + n H(+)(out). The catalysed reaction is a plastoquinone + NADPH + (n+1) H(+)(in) = a plastoquinol + NADP(+) + n H(+)(out). Its function is as follows. NDH-1 shuttles electrons from an unknown electron donor, via FMN and iron-sulfur (Fe-S) centers, to quinones in the respiratory and/or the photosynthetic chain. The immediate electron acceptor for the enzyme in this species is believed to be plastoquinone. Couples the redox reaction to proton translocation, and thus conserves the redox energy in a proton gradient. Cyanobacterial NDH-1 also plays a role in inorganic carbon-concentration. In Microcystis aeruginosa (strain NIES-843 / IAM M-2473), this protein is NAD(P)H-quinone oxidoreductase subunit L.